The following is a 671-amino-acid chain: TBC1 domain family member 15 (671 aa).

Ala-2 carries the N-acetylalanine modification. Residues Ser-23, Ser-32, Ser-70, Ser-205, and Ser-257 each carry the phosphoserine modification. The Rab-GAP TBC domain occupies 329–539 (GLSHSLRKQA…RLWEVMWTEL (211 aa)). Phosphoserine is present on residues Ser-623 and Ser-655. Residues 650 to 671 (EAKDDSPTQTLASPNACRLTPA) are disordered. The residue at position 669 (Thr-669) is a Phosphothreonine.

As to quaternary structure, interacts with non-phosphorylated form of RAB8A; phosphorylation of RAB8A at 'Thr-72' disrupts this interaction. Interacts with ARMC12. Ubiquitous, with highest expression in heart, liver and testis and lower expression in brain, spleen, lung, kidney and skeletal muscle.

The protein localises to the cytoplasm. In terms of biological role, acts as a GTPase activating protein for RAB7A. Does not act on RAB4, RAB5 or RAB6. The polypeptide is TBC1 domain family member 15 (Tbc1d15) (Mus musculus (Mouse)).